The sequence spans 262 residues: Probable dihydroorotate dehydrogenase B (NAD(+)), electron transfer subunit (262 aa).

In terms of domain architecture, FAD-binding FR-type spans 4–97 (VKPIPAEVVE…RGPYGKPFEV (94 aa)). 4 residues coordinate [2Fe-2S] cluster: cysteine 217, cysteine 222, cysteine 225, and cysteine 234.

This sequence belongs to the PyrK family. Heterotetramer of 2 PyrK and 2 PyrD type B subunits. [2Fe-2S] cluster serves as cofactor. It depends on FAD as a cofactor.

Its pathway is pyrimidine metabolism; UMP biosynthesis via de novo pathway; orotate from (S)-dihydroorotate (NAD(+) route): step 1/1. In terms of biological role, responsible for channeling the electrons from the oxidation of dihydroorotate from the FMN redox center in the PyrD type B subunit to the ultimate electron acceptor NAD(+). This Methanopyrus kandleri (strain AV19 / DSM 6324 / JCM 9639 / NBRC 100938) protein is Probable dihydroorotate dehydrogenase B (NAD(+)), electron transfer subunit.